The sequence spans 2203 residues: Genome polyprotein (2203 aa).

Gly-2 carries the N-myristoyl glycine; by host lipid modification. Residues 2–1513 are Cytoplasmic-facing; that stretch reads GAQVSTQKTG…HVSRAFICLQ (1512 aa). The amphipathic alpha-helix stretch occupies residues 567–583; that stretch reads ELQNDVRQAVEGAIGRV. Catalysis depends on for protease 2A activity residues His-890 and Asp-908. Zn(2+) is bound by residues Cys-925 and Cys-927. Cys-979 (for protease 2A activity) is an active-site residue. The Zn(2+) site is built by Cys-985 and His-987. Positions 1119 to 1191 are membrane-binding; the sequence is SNGWLKKFTE…EQSAPSQSDQ (73 aa). Residues 1119 to 1257 form an oligomerization region; the sequence is SNGWLKKFTE…SPGAGKSVAT (139 aa). Positions 1140–1144 are RNA-binding; sequence AVKIQ. An SF3 helicase domain is found at 1223 to 1379; that stretch reads EKKMSNYIQF…SMYSQNGKIN (157 aa). Zn(2+) is bound by residues Cys-1387, Cys-1399, and Cys-1404. The C4-type; degenerate zinc finger occupies 1387–1404; it reads CDEECCPVNFKRCCPLVC. The segment at 1431–1438 is RNA-binding; the sequence is EYNHRHSV. An oligomerization region spans residues 1442–1447; that stretch reads LEALFQ. The stretch at 1514–1529 is an intramembrane region; it reads ALTTFVSVAGIIYIIY. The Cytoplasmic segment spans residues 1530–2203; it reads KLFAGFQGAY…TLRRKWLDSF (674 aa). At Tyr-1539 the chain carries O-(5'-phospho-RNA)-tyrosine. The Peptidase C3 domain occupies 1559–1737; it reads GPAFEFAVAM…FSAALLRHYF (179 aa). Catalysis depends on for protease 3C activity residues His-1598, Glu-1629, and Cys-1705. The RdRp catalytic domain maps to 1968 to 2084; it reads GHLIAFDYSG…SYPWPIDASL (117 aa). Mg(2+) contacts are provided by Asp-1974 and Asp-2070.

It belongs to the picornaviruses polyprotein family. As to quaternary structure, interacts with capsid protein VP1 and capsid protein VP3 to form heterotrimeric protomers. Interacts with capsid protein VP0, and capsid protein VP3 to form heterotrimeric protomers. Five protomers subsequently associate to form pentamers which serve as building blocks for the capsid. Interacts with capsid protein VP2, capsid protein VP3 and capsid protein VP4 following cleavage of capsid protein VP0. In terms of assembly, interacts with capsid protein VP1 and capsid protein VP3 in the mature capsid. As to quaternary structure, interacts with capsid protein VP0 and capsid protein VP1 to form heterotrimeric protomers. Five protomers subsequently associate to form pentamers which serve as building blocks for the capsid. Interacts with capsid protein VP4 in the mature capsid. Interacts with protein 2C; this interaction may be important for virion morphogenesis. Interacts with capsid protein VP1 and capsid protein VP3. In terms of assembly, homodimer. As to quaternary structure, homohexamer; forms a hexameric ring structure with 6-fold symmetry characteristic of AAA+ ATPases. Interacts (via N-terminus) with host RTN3 (via reticulon domain); this interaction is important for viral replication. Interacts with capsid protein VP3; this interaction may be important for virion morphogenesis. Interacts with protein 3CD. In terms of assembly, homodimer. Interacts with host GBF1. Interacts (via GOLD domain) with host ACBD3 (via GOLD domain); this interaction allows the formation of a viral protein 3A/ACBD3 heterotetramer with a 2:2 stoichiometry, which will stimulate the recruitment of host PI4KB in order to synthesize PI4P at the viral RNA replication sites. As to quaternary structure, interacts with RNA-directed RNA polymerase. Interacts with protein 3AB and with RNA-directed RNA polymerase. In terms of assembly, interacts with Viral protein genome-linked and with protein 3CD. Mg(2+) serves as cofactor. Specific enzymatic cleavages in vivo by the viral proteases yield processing intermediates and the mature proteins. Post-translationally, myristoylation is required for the formation of pentamers during virus assembly. Further assembly of 12 pentamers and a molecule of genomic RNA generates the provirion. In terms of processing, during virion maturation, immature virions are rendered infectious following cleavage of VP0 into VP4 and VP2. This maturation seems to be an autocatalytic event triggered by the presence of RNA in the capsid and it is followed by a conformational change infectious virion. Myristoylation is required during RNA encapsidation and formation of the mature virus particle. Post-translationally, VPg is uridylylated by the polymerase into VPg-pUpU. This acts as a nucleotide-peptide primer for the genomic RNA replication.

The protein localises to the virion. Its subcellular location is the host cytoplasm. The protein resides in the host cytoplasmic vesicle membrane. It is found in the host nucleus. The enzyme catalyses a ribonucleoside 5'-triphosphate + H2O = a ribonucleoside 5'-diphosphate + phosphate + H(+). It catalyses the reaction Selective cleavage of Tyr-|-Gly bond in the picornavirus polyprotein.. It carries out the reaction RNA(n) + a ribonucleoside 5'-triphosphate = RNA(n+1) + diphosphate. The catalysed reaction is Selective cleavage of Gln-|-Gly bond in the poliovirus polyprotein. In other picornavirus reactions Glu may be substituted for Gln, and Ser or Thr for Gly.. Its activity is regulated as follows. Replication or transcription is subject to high level of random mutations by the nucleotide analog ribavirin. Forms an icosahedral capsid of pseudo T=3 symmetry with capsid proteins VP2 and VP3. The capsid is 300 Angstroms in diameter, composed of 60 copies of each capsid protein and enclosing the viral positive strand RNA genome. Capsid protein VP1 mainly forms the vertices of the capsid. Capsid protein VP1 interacts with host cell receptor to provide virion attachment to target host cells. This attachment induces virion internalization. Tyrosine kinases are probably involved in the entry process. After binding to its receptor, the capsid undergoes conformational changes. Capsid protein VP1 N-terminus (that contains an amphipathic alpha-helix) and capsid protein VP4 are externalized. Together, they shape a pore in the host membrane through which viral genome is translocated to host cell cytoplasm. In terms of biological role, forms an icosahedral capsid of pseudo T=3 symmetry with capsid proteins VP2 and VP3. The capsid is 300 Angstroms in diameter, composed of 60 copies of each capsid protein and enclosing the viral positive strand RNA genome. Functionally, lies on the inner surface of the capsid shell. After binding to the host receptor, the capsid undergoes conformational changes. Capsid protein VP4 is released, Capsid protein VP1 N-terminus is externalized, and together, they shape a pore in the host membrane through which the viral genome is translocated into the host cell cytoplasm. Its function is as follows. Component of immature procapsids, which is cleaved into capsid proteins VP4 and VP2 after maturation. Allows the capsid to remain inactive before the maturation step. Cysteine protease that cleaves viral polyprotein and specific host proteins. It is responsible for the autocatalytic cleavage between the P1 and P2 regions, which is the first cleavage occurring in the polyprotein. Also cleaves the host translation initiation factor EIF4G1, in order to shut down the capped cellular mRNA translation. Inhibits the host nucleus-cytoplasm protein and RNA trafficking by cleaving host members of the nuclear pores. Counteracts stress granule formation probably by antagonizing its assembly or promoting its dissassembly. In terms of biological role, plays an essential role in the virus replication cycle by acting as a viroporin. Creates a pore in the host endoplasmic reticulum and as a consequence releases Ca2+ in the cytoplasm of infected cell. In turn, high levels of cytoplasmic calcium may trigger membrane trafficking and transport of viral ER-associated proteins to viroplasms, sites of viral genome replication. Functionally, induces and associates with structural rearrangements of intracellular membranes. Displays RNA-binding, nucleotide binding and NTPase activities. May play a role in virion morphogenesis and viral RNA encapsidation by interacting with the capsid protein VP3. Its function is as follows. Localizes the viral replication complex to the surface of membranous vesicles. Together with protein 3CD binds the Cis-Active RNA Element (CRE) which is involved in RNA synthesis initiation. Acts as a cofactor to stimulate the activity of 3D polymerase, maybe through a nucleid acid chaperone activity. Localizes the viral replication complex to the surface of membranous vesicles. It inhibits host cell endoplasmic reticulum-to-Golgi apparatus transport and causes the disassembly of the Golgi complex, possibly through GBF1 interaction. This would result in depletion of MHC, trail receptors and IFN receptors at the host cell surface. Plays an essential role in viral RNA replication by recruiting ACBD3 and PI4KB at the viral replication sites, thereby allowing the formation of the rearranged membranous structures where viral replication takes place. In terms of biological role, acts as a primer for viral RNA replication and remains covalently bound to viral genomic RNA. VPg is uridylylated prior to priming replication into VPg-pUpU. The oriI viral genomic sequence may act as a template for this. The VPg-pUpU is then used as primer on the genomic RNA poly(A) by the RNA-dependent RNA polymerase to replicate the viral genome. During genome replication, the VPg-RNA linkage is removed by the host TDP2, thereby accelerating replication. During the late stage of the replication cycle, host TDP2 is excluded from sites of viral RNA synthesis and encapsidation, allowing for the generation of progeny virions. Functionally, involved in the viral replication complex and viral polypeptide maturation. It exhibits protease activity with a specificity and catalytic efficiency that is different from protease 3C. Protein 3CD lacks polymerase activity. Protein 3CD binds to the 5'UTR of the viral genome. Its function is as follows. Replicates the viral genomic RNA on the surface of intracellular membranes. May form linear arrays of subunits that propagate along a strong head-to-tail interaction called interface-I. Covalently attaches UMP to a tyrosine of VPg, which is used to prime RNA synthesis. The positive stranded RNA genome is first replicated at virus induced membranous vesicles, creating a dsRNA genomic replication form. This dsRNA is then used as template to synthesize positive stranded RNA genomes. ss(+)RNA genomes are either translated, replicated or encapsidated. Major viral protease that mediates proteolytic processing of the polyprotein. Cleaves host EIF5B, contributing to host translation shutoff. Also cleaves host PABPC1, contributing to host translation shutoff. Cleaves host NLRP1, triggers host N-glycine-mediated degradation of the autoinhibitory NLRP1 N-terminal fragment. The chain is Genome polyprotein from Echovirus 9 (strain Barty).